The primary structure comprises 1555 residues: Glycogen debranching enzyme (1555 aa).

The residue at position 87 (serine 87) is a Phosphoserine. Catalysis depends on residues aspartate 549, histidine 552, and aspartate 650.

Belongs to the glycogen debranching enzyme family. As to quaternary structure, monomer. Interacts with NHLRC1/malin. In terms of processing, the N-terminus is blocked. Post-translationally, ubiquitinated.

The protein resides in the cytoplasm. The enzyme catalyses Transfers a segment of a (1-&gt;4)-alpha-D-glucan to a new position in an acceptor, which may be glucose or a (1-&gt;4)-alpha-D-glucan.. It catalyses the reaction Hydrolysis of (1-&gt;6)-alpha-D-glucosidic branch linkages in glycogen phosphorylase limit dextrin.. Multifunctional enzyme acting as 1,4-alpha-D-glucan:1,4-alpha-D-glucan 4-alpha-D-glycosyltransferase and amylo-1,6-glucosidase in glycogen degradation. The chain is Glycogen debranching enzyme (AGL) from Oryctolagus cuniculus (Rabbit).